The primary structure comprises 662 residues: Glutathione hydrolase 7 (662 aa).

At 1-106 the chain is on the cytoplasmic side; the sequence is MAAENEASQE…AAECSCRQDG (106 aa). 4 positions are modified to phosphoserine: Ser17, Ser72, Ser79, and Ser83. The segment at 26–90 is disordered; that stretch reads SFPRLPEDEP…DGSPLRETRK (65 aa). Over residues 72–83 the composition is skewed to low complexity; it reads SSSSEMGSQDGS. Residues 107 to 127 form a helical; Signal-anchor for type II membrane protein membrane-spanning segment; it reads LTVIVTACLTFATGVTVALVM. At 128-662 the chain is on the extracellular side; sequence QIYFGDPQIF…SPDAAGATIL (535 aa). Asn198, Asn267, Asn283, Asn330, Asn353, Asn394, Asn452, Asn519, Asn523, and Asn586 each carry an N-linked (GlcNAc...) asparagine glycan.

It belongs to the gamma-glutamyltransferase family. As to quaternary structure, interacts with TLCD3A. In terms of assembly, heterodimer composed of the light and heavy chains. The active site is located in the light chain. In terms of processing, cleaved by autocatalysis into a large and a small subunit and the autocatalytic cleavage is essential to the functional activation of the enzyme. In terms of tissue distribution, widely expressed, but at low level, except in the airway epithelial cells. Detected in brain, heart, kidney, liver, lung, spleen, testis and trachea.

It localises to the membrane. The catalysed reaction is an N-terminal (5-L-glutamyl)-[peptide] + an alpha-amino acid = 5-L-glutamyl amino acid + an N-terminal L-alpha-aminoacyl-[peptide]. It catalyses the reaction glutathione + H2O = L-cysteinylglycine + L-glutamate. The enzyme catalyses an S-substituted glutathione + H2O = an S-substituted L-cysteinylglycine + L-glutamate. It functions in the pathway sulfur metabolism; glutathione metabolism. In terms of biological role, hydrolyzes and transfers gamma-glutamyl moieties from glutathione and other gamma-glutamyl compounds to acceptors. The protein is Glutathione hydrolase 7 of Homo sapiens (Human).